The following is a 254-amino-acid chain: UPF0246 protein BDI_1226 (254 aa).

It belongs to the UPF0246 family.

This Parabacteroides distasonis (strain ATCC 8503 / DSM 20701 / CIP 104284 / JCM 5825 / NCTC 11152) protein is UPF0246 protein BDI_1226.